A 194-amino-acid polypeptide reads, in one-letter code: Leucyl/phenylalanyl-tRNA--protein transferase (194 aa).

It belongs to the L/F-transferase family.

The protein localises to the cytoplasm. It carries out the reaction N-terminal L-lysyl-[protein] + L-leucyl-tRNA(Leu) = N-terminal L-leucyl-L-lysyl-[protein] + tRNA(Leu) + H(+). It catalyses the reaction N-terminal L-arginyl-[protein] + L-leucyl-tRNA(Leu) = N-terminal L-leucyl-L-arginyl-[protein] + tRNA(Leu) + H(+). The catalysed reaction is L-phenylalanyl-tRNA(Phe) + an N-terminal L-alpha-aminoacyl-[protein] = an N-terminal L-phenylalanyl-L-alpha-aminoacyl-[protein] + tRNA(Phe). In terms of biological role, functions in the N-end rule pathway of protein degradation where it conjugates Leu, Phe and, less efficiently, Met from aminoacyl-tRNAs to the N-termini of proteins containing an N-terminal arginine or lysine. In Pelodictyon phaeoclathratiforme (strain DSM 5477 / BU-1), this protein is Leucyl/phenylalanyl-tRNA--protein transferase.